A 305-amino-acid polypeptide reads, in one-letter code: Ribonuclease BN (305 aa).

Zn(2+) is bound by residues H64, H66, D68, H69, H141, D212, and H270. The Proton acceptor role is filled by D68.

This sequence belongs to the RNase Z family. RNase BN subfamily. In terms of assembly, homodimer. It depends on Zn(2+) as a cofactor.

Zinc phosphodiesterase, which has both exoribonuclease and endoribonuclease activities. The sequence is that of Ribonuclease BN from Escherichia coli O17:K52:H18 (strain UMN026 / ExPEC).